The primary structure comprises 883 residues: Phosphoenolpyruvate carboxylase (883 aa).

Catalysis depends on residues H138 and K546.

This sequence belongs to the PEPCase type 1 family. Requires Mg(2+) as cofactor.

The catalysed reaction is oxaloacetate + phosphate = phosphoenolpyruvate + hydrogencarbonate. Forms oxaloacetate, a four-carbon dicarboxylic acid source for the tricarboxylic acid cycle. The chain is Phosphoenolpyruvate carboxylase from Salmonella choleraesuis (strain SC-B67).